The chain runs to 119 residues: Holo-[acyl-carrier-protein] synthase (119 aa).

Residues Asp-8 and Glu-59 each contribute to the Mg(2+) site.

Belongs to the P-Pant transferase superfamily. AcpS family. It depends on Mg(2+) as a cofactor.

The protein localises to the cytoplasm. It catalyses the reaction apo-[ACP] + CoA = holo-[ACP] + adenosine 3',5'-bisphosphate + H(+). Functionally, transfers the 4'-phosphopantetheine moiety from coenzyme A to a Ser of acyl-carrier-protein. The protein is Holo-[acyl-carrier-protein] synthase of Staphylococcus aureus (strain USA300).